The primary structure comprises 201 residues: Flagellin B1 (201 aa).

Residues 1–11 (MFEQNDDRDRG) constitute a propeptide that is removed on maturation.

This sequence belongs to the archaeal flagellin family.

The protein resides in the archaeal flagellum. Its function is as follows. Flagellin is the subunit protein which polymerizes to form the filaments of archaeal flagella. This is Flagellin B1 (flaB1) from Natrialba magadii (strain ATCC 43099 / DSM 3394 / CCM 3739 / CIP 104546 / IAM 13178 / JCM 8861 / NBRC 102185 / NCIMB 2190 / MS3) (Natronobacterium magadii).